A 144-amino-acid chain; its full sequence is Testis-specific protein TSX (144 aa).

Disordered regions lie at residues 1–21 (MSEK…DLPE), 69–99 (EDRV…RDID), and 120–144 (FTDQ…NPTD). Positions 75–90 (TDDEDTCQAGCTEDDE) are enriched in acidic residues.

As to expression, testis.

Its function is as follows. May have an RNA/DNA binding role. This chain is Testis-specific protein TSX (Tsx), found in Mus musculus (Mouse).